We begin with the raw amino-acid sequence, 83 residues long: Small ribosomal subunit protein uS17 (83 aa).

It belongs to the universal ribosomal protein uS17 family. In terms of assembly, part of the 30S ribosomal subunit.

In terms of biological role, one of the primary rRNA binding proteins, it binds specifically to the 5'-end of 16S ribosomal RNA. This chain is Small ribosomal subunit protein uS17, found in Campylobacter curvus (strain 525.92).